Here is a 144-residue protein sequence, read N- to C-terminus: Methylglyoxal synthase (144 aa).

One can recognise an MGS-like domain in the interval 1–144 (MKIALIAHDE…KSGEEKETER (144 aa)). Substrate contacts are provided by residues H8, K12, 34 to 37 (TGTT), and 54 to 55 (SG). D60 serves as the catalytic Proton donor/acceptor. H87 contributes to the substrate binding site.

Belongs to the methylglyoxal synthase family.

The catalysed reaction is dihydroxyacetone phosphate = methylglyoxal + phosphate. Its function is as follows. Catalyzes the formation of methylglyoxal from dihydroxyacetone phosphate. This Geobacillus thermodenitrificans (strain NG80-2) protein is Methylglyoxal synthase.